The sequence spans 712 residues: DNA ligase (712 aa).

A compositionally biased stretch (low complexity) spans 1–22 (MSTQYDSDSSPAASNSGSADPA). The interval 1–23 (MSTQYDSDSSPAASNSGSADPAL) is disordered. 53-57 (DAEFD) lines the NAD(+) pocket. The segment at 69–93 (SHPEAVTGPSPTTEVAPSPPESSPF) is disordered. Residues 104 to 105 (SL) and glutamate 129 each bind NAD(+). Lysine 131 (N6-AMP-lysine intermediate) is an active-site residue. Arginine 152, glutamate 192, lysine 308, and lysine 332 together coordinate NAD(+). Zn(2+) contacts are provided by cysteine 426, cysteine 429, cysteine 445, and cysteine 451. A BRCT domain is found at 624–712 (IQADLLAGLS…GPGKGDAEED (89 aa)).

The protein belongs to the NAD-dependent DNA ligase family. LigA subfamily. Requires Mg(2+) as cofactor. Mn(2+) serves as cofactor.

The enzyme catalyses NAD(+) + (deoxyribonucleotide)n-3'-hydroxyl + 5'-phospho-(deoxyribonucleotide)m = (deoxyribonucleotide)n+m + AMP + beta-nicotinamide D-nucleotide.. In terms of biological role, DNA ligase that catalyzes the formation of phosphodiester linkages between 5'-phosphoryl and 3'-hydroxyl groups in double-stranded DNA using NAD as a coenzyme and as the energy source for the reaction. It is essential for DNA replication and repair of damaged DNA. This Corynebacterium urealyticum (strain ATCC 43042 / DSM 7109) protein is DNA ligase.